Consider the following 246-residue polypeptide: Chalcone--flavanone isomerase 1 (246 aa).

Substrate-binding residues include threonine 59, asparagine 124, and serine 201.

It belongs to the chalcone isomerase family. Mostly expressed in siliques and flowers, and, to a lower extent, in leaves.

It catalyses the reaction a chalcone = a flavanone.. Its pathway is secondary metabolite biosynthesis; flavonoid biosynthesis. In terms of biological role, catalyzes the intramolecular cyclization of bicyclic chalcones into tricyclic (S)-flavanones. Responsible for the isomerization of 4,2',4',6'-tetrahydroxychalcone (also termed chalcone) into naringenin. This Arabidopsis thaliana (Mouse-ear cress) protein is Chalcone--flavanone isomerase 1 (CHI1).